The primary structure comprises 492 residues: MDPYKYRSSSAFNTPFWTTNSGAPVWNNNSSLTVGTRGPILLEDYHLVEKLANFDRERIPERVVHARGASAKGFFEVTHDISHLTCADFLRAPGVQTPVIVRFSTVIHERGSPETLRDPRGFAVKFYTREGNFDLVGNNFPVFFVRDGMKFPDMVHALKPNPKSHIQENWRILDFFSHHPESLHMFTFLFDDLGVPQDYRHMEGSGVNTYTLINKAGKAQYVKFHWKPTCGVKCLLEDEAIKVGGANHSHATKDLYDSISAGNYPEWKLFIQIIEPDHEDKFDFDPLDVTKTWPEDIIPLMPVGRLVLNKNIDNFFAENEQLAFCPALIVPGVYYSDDKLLQTRIFSYADTQRHRLGPNYLQLPPNAPKCAHHNNHHEGLMNFMHRDEEVNYFPSRFDPVRHAERHPIPPPVLTGKRDRCMIEKENNFKQPGERYRTFAPDRQERFVCRWVDALSDPRVTHEIRSIWISYWTQADKSLGQKLASRLNVRPTM.

Residues H65 and N138 contribute to the active site. Position 348 (Y348) interacts with heme.

The protein belongs to the catalase family. In terms of assembly, homotetramer. Heme is required as a cofactor.

Its subcellular location is the cytoplasm. It localises to the cytosol. It is found in the peroxisome matrix. It carries out the reaction 2 H2O2 = O2 + 2 H2O. Its function is as follows. Catalyzes the degradation of hydrogen peroxide (H(2)O(2)) generated by peroxisomal oxidases to water and oxygen, thereby protecting cells from the toxic effects of hydrogen peroxide. The chain is Catalase from Soldanella alpina (Alpine snowbell).